A 276-amino-acid chain; its full sequence is Secretagogin (276 aa).

5 EF-hand domains span residues 12–47 (LDAA…LLAK), 105–140 (DNSV…LFLH), 149–184 (ELEE…QENF), 197–232 (ERKR…MMEL), and 240–276 (VDLD…KINP). Residues Asp-118, Asp-120, Ser-122, Glu-129, Asp-162, Asn-164, Asp-166, Arg-168, Asp-173, Asp-210, Ser-212, Thr-214, Glu-221, Asp-254, Asn-256, Asp-258, Lys-260, and Glu-265 each contribute to the Ca(2+) site.

In terms of tissue distribution, highly expressed in pancreas, in particular in pancreatic islets and pancreatic beta-cells. Detected in prostate, adrenal gland, small intestine, stomach and thyroid (at protein level).

Its subcellular location is the cytoplasm. The protein resides in the secreted. It localises to the cytoplasmic vesicle. It is found in the secretory vesicle membrane. This chain is Secretagogin (Scgn), found in Rattus norvegicus (Rat).